A 121-amino-acid chain; its full sequence is Holo-[acyl-carrier-protein] synthase (121 aa).

Mg(2+) is bound by residues Asp8 and Glu58.

This sequence belongs to the P-Pant transferase superfamily. AcpS family. Homotrimer. Mg(2+) is required as a cofactor.

It localises to the cytoplasm. It catalyses the reaction apo-[ACP] + CoA = holo-[ACP] + adenosine 3',5'-bisphosphate + H(+). Transfers the 4'-phosphopantetheine moiety from coenzyme A to a Ser of fatty acid acyl-carrier-protein ACP. Also modifies the D-alanyl carrier protein but fails to recognize PCP and AcpK, an acyl carrier protein of secondary metabolism. This chain is Holo-[acyl-carrier-protein] synthase, found in Bacillus subtilis (strain 168).